A 299-amino-acid chain; its full sequence is ATP phosphoribosyltransferase (299 aa).

The protein belongs to the ATP phosphoribosyltransferase family. Long subfamily. As to quaternary structure, equilibrium between an active dimeric form, an inactive hexameric form and higher aggregates. Interconversion between the various forms is largely reversible and is influenced by the natural substrates and inhibitors of the enzyme. It depends on Mg(2+) as a cofactor.

The protein resides in the cytoplasm. The catalysed reaction is 1-(5-phospho-beta-D-ribosyl)-ATP + diphosphate = 5-phospho-alpha-D-ribose 1-diphosphate + ATP. It functions in the pathway amino-acid biosynthesis; L-histidine biosynthesis; L-histidine from 5-phospho-alpha-D-ribose 1-diphosphate: step 1/9. Its activity is regulated as follows. Feedback inhibited by histidine. Functionally, catalyzes the condensation of ATP and 5-phosphoribose 1-diphosphate to form N'-(5'-phosphoribosyl)-ATP (PR-ATP). Has a crucial role in the pathway because the rate of histidine biosynthesis seems to be controlled primarily by regulation of HisG enzymatic activity. The sequence is that of ATP phosphoribosyltransferase from Edwardsiella ictaluri (strain 93-146).